The sequence spans 273 residues: Large ribosomal subunit protein uL2c (273 aa).

2 disordered regions span residues 30 to 55 (EKKL…RHRG) and 222 to 243 (GSAM…PIGR). Residues 45-55 (NKGRITTRHRG) show a composition bias toward basic residues.

Belongs to the universal ribosomal protein uL2 family. Part of the 50S ribosomal subunit.

It is found in the plastid. In Prototheca wickerhamii, this protein is Large ribosomal subunit protein uL2c (rpl2).